Here is a 239-residue protein sequence, read N- to C-terminus: Ribonuclease PH (239 aa).

Phosphate is bound by residues R86 and 124 to 126 (GTR).

The protein belongs to the RNase PH family. As to quaternary structure, homohexameric ring arranged as a trimer of dimers.

It catalyses the reaction tRNA(n+1) + phosphate = tRNA(n) + a ribonucleoside 5'-diphosphate. Its function is as follows. Phosphorolytic 3'-5' exoribonuclease that plays an important role in tRNA 3'-end maturation. Removes nucleotide residues following the 3'-CCA terminus of tRNAs; can also add nucleotides to the ends of RNA molecules by using nucleoside diphosphates as substrates, but this may not be physiologically important. Probably plays a role in initiation of 16S rRNA degradation (leading to ribosome degradation) during starvation. The chain is Ribonuclease PH from Rhizobium leguminosarum bv. trifolii (strain WSM2304).